The primary structure comprises 239 residues: Cysteine-rich venom protein 2 (239 aa).

An N-terminal signal peptide occupies residues 1 to 19 (MIALIVLPILAAVLQQSSG). The SCP domain maps to 38–166 (VDLHNSLRRS…EYSYFYVCQY (129 aa)). 7 disulfide bridges follow: Cys-75/Cys-153, Cys-92/Cys-167, Cys-148/Cys-164, Cys-186/Cys-193, Cys-189/Cys-198, Cys-202/Cys-234, and Cys-219/Cys-232. The region spanning 198 to 234 (CTNPCPKKISTQLPRFGPQAGCQDKQMQSDCSATCFC) is the ShKT domain.

Belongs to the CRISP family. Expressed by the venom gland.

The protein resides in the secreted. Its function is as follows. Weakly blocks contraction of smooth muscle elicited by high potassium-induced depolarization, but does not block caffeine-stimulated contraction. May target voltage-gated calcium channels on smooth muscle. The sequence is that of Cysteine-rich venom protein 2 from Sistrurus catenatus edwardsii (Desert massasauga).